Consider the following 27-residue polypeptide: NADH-ubiquinone oxidoreductase chain 1 (27 aa).

Residues 3 to 23 (LIFPLVGSLLLVICVMVGVAF) traverse the membrane as a helical segment.

It belongs to the complex I subunit 1 family.

The protein resides in the mitochondrion inner membrane. The catalysed reaction is a ubiquinone + NADH + 5 H(+)(in) = a ubiquinol + NAD(+) + 4 H(+)(out). Core subunit of the mitochondrial membrane respiratory chain NADH dehydrogenase (Complex I) that is believed to belong to the minimal assembly required for catalysis. Complex I functions in the transfer of electrons from NADH to the respiratory chain. The immediate electron acceptor for the enzyme is believed to be ubiquinone. In Simulium vittatum (Striped black fly), this protein is NADH-ubiquinone oxidoreductase chain 1 (ND1).